The chain runs to 100 residues: Urease subunit gamma (100 aa).

This sequence belongs to the urease gamma subunit family. Heterotrimer of UreA (gamma), UreB (beta) and UreC (alpha) subunits. Three heterotrimers associate to form the active enzyme.

Its subcellular location is the cytoplasm. The enzyme catalyses urea + 2 H2O + H(+) = hydrogencarbonate + 2 NH4(+). The protein operates within nitrogen metabolism; urea degradation; CO(2) and NH(3) from urea (urease route): step 1/1. The sequence is that of Urease subunit gamma from Paenarthrobacter aurescens (strain TC1).